Reading from the N-terminus, the 387-residue chain is Patatin group J-1 (387 aa).

The signal sequence occupies residues 1–23; that stretch reads MATTKSFLILIVMILATTSSTFA. The PNPLA domain occupies 32–230; sequence LSIDGGGIKG…TVGDPALLSL (199 aa). The short motif at 36 to 41 is the GXGXXG element; the sequence is GGGIKG. The GXSXG motif lies at 75–79; that stretch reads GTSTG. Ser77 acts as the Nucleophile in catalysis. The N-linked (GlcNAc...) asparagine glycan is linked to Asn115. The Proton acceptor role is filled by Asp216. The DGA/G signature appears at 216-218; it reads DGG. Residues 322-385 are a coiled coil; the sequence is ENALTGTTTE…NRKKLRANKA (64 aa).

It belongs to the patatin family. In terms of tissue distribution, tuber.

It localises to the vacuole. In terms of biological role, probable lipolytic acyl hydrolase (LAH), an activity which is thought to be involved in the response of tubers to pathogens. The chain is Patatin group J-1 from Solanum tuberosum (Potato).